The sequence spans 147 residues: Putative toxin MJ0142 (147 aa).

Belongs to the UPF0332 family.

Its function is as follows. Putative toxin component of a putative type VII toxin-antitoxin (TA) system. Its cognate antitoxin might be MJ0141. The protein is Putative toxin MJ0142 of Methanocaldococcus jannaschii (strain ATCC 43067 / DSM 2661 / JAL-1 / JCM 10045 / NBRC 100440) (Methanococcus jannaschii).